Reading from the N-terminus, the 162-residue chain is NADH-quinone oxidoreductase subunit I 2 (162 aa).

4Fe-4S ferredoxin-type domains are found at residues 52-82 and 93-122; these read LRRY…IEAG and VRYD…EGPN. Positions 62, 65, 68, 72, 102, 105, 108, and 112 each coordinate [4Fe-4S] cluster.

Belongs to the complex I 23 kDa subunit family. As to quaternary structure, NDH-1 is composed of 14 different subunits. Subunits NuoA, H, J, K, L, M, N constitute the membrane sector of the complex. [4Fe-4S] cluster is required as a cofactor.

It localises to the cell inner membrane. It catalyses the reaction a quinone + NADH + 5 H(+)(in) = a quinol + NAD(+) + 4 H(+)(out). Functionally, NDH-1 shuttles electrons from NADH, via FMN and iron-sulfur (Fe-S) centers, to quinones in the respiratory chain. The immediate electron acceptor for the enzyme in this species is believed to be ubiquinone. Couples the redox reaction to proton translocation (for every two electrons transferred, four hydrogen ions are translocated across the cytoplasmic membrane), and thus conserves the redox energy in a proton gradient. This chain is NADH-quinone oxidoreductase subunit I 2, found in Rhodopseudomonas palustris (strain BisB5).